The following is an 83-amino-acid chain: Cytochrome b559 subunit alpha (83 aa).

A helical membrane pass occupies residues 21-35 (VIHSITIPSLFIAGW). H23 is a heme binding site.

This sequence belongs to the PsbE/PsbF family. Heterodimer of an alpha subunit and a beta subunit. PSII is composed of 1 copy each of membrane proteins PsbA, PsbB, PsbC, PsbD, PsbE, PsbF, PsbH, PsbI, PsbJ, PsbK, PsbL, PsbM, PsbT, PsbX, PsbY, PsbZ, Psb30/Ycf12, at least 3 peripheral proteins of the oxygen-evolving complex and a large number of cofactors. It forms dimeric complexes. Heme b serves as cofactor.

The protein resides in the plastid. Its subcellular location is the chloroplast thylakoid membrane. This b-type cytochrome is tightly associated with the reaction center of photosystem II (PSII). PSII is a light-driven water:plastoquinone oxidoreductase that uses light energy to abstract electrons from H(2)O, generating O(2) and a proton gradient subsequently used for ATP formation. It consists of a core antenna complex that captures photons, and an electron transfer chain that converts photonic excitation into a charge separation. This is Cytochrome b559 subunit alpha from Psilotum nudum (Whisk fern).